The chain runs to 845 residues: Beta-mannosidase B (845 aa).

Positions 1 to 20 (MSKLQQFPLSKGWSFRDSED) are disordered. A glycan (N-linked (GlcNAc...) asparagine) is linked at Asn252. Glu432 serves as the catalytic Proton donor. 2 N-linked (GlcNAc...) asparagine glycosylation sites follow: Asn717 and Asn723.

The protein belongs to the glycosyl hydrolase 2 family. Beta-mannosidase B subfamily.

It catalyses the reaction Hydrolysis of terminal, non-reducing beta-D-mannose residues in beta-D-mannosides.. The protein operates within glycan metabolism; N-glycan degradation. Exoglycosidase that cleaves the single beta-linked mannose residue from the non-reducing end of beta-mannosidic oligosaccharides of various complexity and length. Prefers mannobiose over mannotriose and has no activity against polymeric mannan. Is also severely restricted by galactosyl substitutions at the +1 subsite. This is Beta-mannosidase B (mndB) from Neosartorya fischeri (strain ATCC 1020 / DSM 3700 / CBS 544.65 / FGSC A1164 / JCM 1740 / NRRL 181 / WB 181) (Aspergillus fischerianus).